A 138-amino-acid chain; its full sequence is Phosphoribosyl-AMP cyclohydrolase (138 aa).

Aspartate 84 contributes to the Mg(2+) binding site. Cysteine 85 provides a ligand contact to Zn(2+). Mg(2+) is bound by residues aspartate 86 and aspartate 88. Positions 102 and 109 each coordinate Zn(2+).

Belongs to the PRA-CH family. Homodimer. Mg(2+) is required as a cofactor. The cofactor is Zn(2+).

The protein resides in the cytoplasm. It carries out the reaction 1-(5-phospho-beta-D-ribosyl)-5'-AMP + H2O = 1-(5-phospho-beta-D-ribosyl)-5-[(5-phospho-beta-D-ribosylamino)methylideneamino]imidazole-4-carboxamide. Its pathway is amino-acid biosynthesis; L-histidine biosynthesis; L-histidine from 5-phospho-alpha-D-ribose 1-diphosphate: step 3/9. Catalyzes the hydrolysis of the adenine ring of phosphoribosyl-AMP. The sequence is that of Phosphoribosyl-AMP cyclohydrolase from Burkholderia pseudomallei (strain K96243).